A 662-amino-acid chain; its full sequence is Glycogen debranching enzyme (662 aa).

Catalysis depends on D338, which acts as the Nucleophile. The active-site Proton donor is the E373.

Belongs to the glycosyl hydrolase 13 family.

The catalysed reaction is Hydrolysis of (1-&gt;6)-alpha-D-glucosidic linkages to branches with degrees of polymerization of three or four glucose residues in limit dextrin.. It participates in glycan degradation; glycogen degradation. Removes maltotriose and maltotetraose chains that are attached by 1,6-alpha-linkage to the limit dextrin main chain, generating a debranched limit dextrin. The protein is Glycogen debranching enzyme of Yersinia pestis.